An 805-amino-acid chain; its full sequence is Angiotensin-converting enzyme 2 (805 aa).

A signal peptide spans 1 to 17 (MSSSCWLLLSLVAVATA). Topologically, residues 18–740 (QSLIEEKAES…LKPPYEPPVT (723 aa)) are extracellular. A Peptidase M2 domain is found at 19–607 (SLIEEKAESF…QNRNSTVGWS (589 aa)). N-linked (GlcNAc...) asparagine glycosylation is found at asparagine 53, asparagine 82, and asparagine 90. A disulfide bridge connects residues cysteine 133 and cysteine 141. Arginine 169 is a chloride binding site. Residue arginine 273 participates in substrate binding. N-linked (GlcNAc...) asparagine glycosylation occurs at asparagine 299. An intrachain disulfide couples cysteine 344 to cysteine 361. Residue 345–346 (HP) participates in substrate binding. Position 374 (histidine 374) interacts with Zn(2+). Catalysis depends on glutamate 375, which acts as the Proton acceptor. Positions 378 and 402 each coordinate Zn(2+). N-linked (GlcNAc...) asparagine glycosylation is present at asparagine 432. Chloride contacts are provided by tryptophan 477 and lysine 481. Histidine 505 serves as the catalytic Proton donor. Tyrosine 515 contributes to the substrate binding site. A disulfide bridge links cysteine 530 with cysteine 542. N-linked (GlcNAc...) asparagine glycans are attached at residues asparagine 546 and asparagine 601. In terms of domain architecture, Collectrin-like spans 614-805 (ADQSIKVRIS…QNSDDAQTSF (192 aa)). Positions 652 to 659 (REYFSREK) are essential for cleavage by ADAM17. 2 N-linked (GlcNAc...) asparagine glycosylation sites follow: asparagine 660 and asparagine 690. Residues 697–716 (RSEVEEAIRMSRGRINDIFG) are essential for cleavage by TMPRSS11D and TMPRSS2. A helical membrane pass occupies residues 741-761 (IWLIIFGVVMGTVVVGIVILI). At 762–805 (VTGIKGRKKKNETKREENPYDSMDIGKGESNAGFQNSDDAQTSF) the chain is on the cytoplasmic side. The interval 771-805 (KNETKREENPYDSMDIGKGESNAGFQNSDDAQTSF) is disordered. An LIR motif is present at residues 778–786 (ENPYDSMDI). Tyrosine 781 is subject to Phosphotyrosine. Residues 781–784 (YDSM) carry the Endocytic sorting signal motif. An SH2-binding motif is present at residues 781–785 (YDSMD). At serine 783 the chain carries Phosphoserine. Lysine 788 participates in a covalent cross-link: Glycyl lysine isopeptide (Lys-Gly) (interchain with G-Cter in ubiquitin). The PTB motif lies at 792–795 (NAGF). The span at 793 to 805 (AGFQNSDDAQTSF) shows a compositional bias: polar residues. The PDZ-binding motif lies at 803-805 (TSF).

It belongs to the peptidase M2 family. Homodimer. Interacts with the catalytically active form of TMPRSS2. Interacts with SLC6A19; this interaction is essential for expression and function of SLC6A19 in intestine. Interacts with ITGA5:ITGB1. Probably interacts (via endocytic sorting signal motif) with AP2M1; the interaction is inhibited by phosphorylation of Tyr-781. Interacts (via PDZ-binding motif) with NHERF1 (via PDZ domains); the interaction may enhance ACE2 membrane residence. It depends on Zn(2+) as a cofactor. Requires chloride as cofactor. Post-translationally, glycosylated. Proteolytic cleavage by ADAM17 generates a secreted form. Also cleaved by serine proteases: TMPRSS2, TMPRSS11D and HPN/TMPRSS1. In terms of processing, phosphorylated. Phosphorylation at Tyr-781 probably inhibits interaction with AP2M1 and enables interactions with proteins containing SH2 domains. Post-translationally, ubiquitinated. Ubiquitinated on Lys-788 via 'Lys-48'-linked ubiquitin. 'Lys-48'-linked deubiquitinated by USP50 on the Lys-788; leading to its stabilization. In terms of tissue distribution, expressed in heart, kidney and forebrain. In testis, expression is restricted to Leydig cells. In heart, expressed in endothelial cells from small and large arteries, arterial smooth muscle cells, and myocytes (at protein level). Ubiquitously expressed, with highest levels in ileum, bladder and lung.

The protein resides in the secreted. It is found in the cell membrane. Its subcellular location is the cytoplasm. The protein localises to the cell projection. It localises to the cilium. The protein resides in the apical cell membrane. The enzyme catalyses angiotensin II + H2O = angiotensin-(1-7) + L-phenylalanine. It carries out the reaction angiotensin I + H2O = angiotensin-(1-9) + L-leucine. The catalysed reaction is bradykinin(1-8) + H2O = bradykinin(1-7) + L-phenylalanine. It catalyses the reaction neurotensin + H2O = neurotensin-(1-12) + L-leucine. The enzyme catalyses kinetensin + H2O = kinetensin-(1-8) + L-leucine. It carries out the reaction dynorphin A-(1-13) + H2O = dynorphin A-(1-12) + L-lysine. The catalysed reaction is apelin-13 + H2O = apelin-12 + L-phenylalanine. It catalyses the reaction [Pyr1]apelin-13 + H2O = [Pyr1]apelin-12 + L-phenylalanine. The enzyme catalyses apelin-17 + H2O = apelin-16 + L-phenylalanine. With respect to regulation, activated by chloride and fluoride, but not bromide. Inhibited by MLN-4760, cFP_Leu, and EDTA, but not by the ACE inhibitors linosipril, captopril, enalaprilat. In terms of biological role, essential counter-regulatory carboxypeptidase of the renin-angiotensin hormone system that is a critical regulator of blood volume, systemic vascular resistance, and thus cardiovascular homeostasis. Converts angiotensin I to angiotensin 1-9, a nine-amino acid peptide with anti-hypertrophic effects in cardiomyocytes, and angiotensin II to angiotensin 1-7, which then acts as a beneficial vasodilator and anti-proliferation agent, counterbalancing the actions of the vasoconstrictor angiotensin II. Also removes the C-terminal residue from three other vasoactive peptides, neurotensin, kinetensin, and des-Arg bradykinin, but is not active on bradykinin. Also cleaves other biological peptides, such as apelins, casomorphins and dynorphin A. Plays an important role in amino acid transport by acting as binding partner of amino acid transporter SLC6A19 in intestine, regulating trafficking, expression on the cell surface, and its catalytic activity. In Rattus norvegicus (Rat), this protein is Angiotensin-converting enzyme 2 (Ace2).